Reading from the N-terminus, the 284-residue chain is 2-dehydro-3-deoxyphosphooctonate aldolase (284 aa).

Belongs to the KdsA family.

It localises to the cytoplasm. The enzyme catalyses D-arabinose 5-phosphate + phosphoenolpyruvate + H2O = 3-deoxy-alpha-D-manno-2-octulosonate-8-phosphate + phosphate. Its pathway is carbohydrate biosynthesis; 3-deoxy-D-manno-octulosonate biosynthesis; 3-deoxy-D-manno-octulosonate from D-ribulose 5-phosphate: step 2/3. It participates in bacterial outer membrane biogenesis; lipopolysaccharide biosynthesis. This Burkholderia mallei (strain NCTC 10247) protein is 2-dehydro-3-deoxyphosphooctonate aldolase.